The primary structure comprises 1472 residues: Adhesion G protein-coupled receptor L1 (1472 aa).

The first 24 residues, 1–24, serve as a signal peptide directing secretion; it reads MARLAAVLWSLCVTAILVTSATQG. Over 25–857 the chain is Extracellular; that stretch reads LSRAGLPFGL…EIYQGRINEL (833 aa). The 90-residue stretch at 40-129 folds into the SUEL-type lectin domain; sequence ACEGYPIELR…KYLEVQYDCV (90 aa). 5 cysteine pairs are disulfide-bonded: Cys41–Cys71, Cys50–Cys128, Cys83–Cys115, Cys96–Cys102, and Cys140–Cys322. Glu42 is a binding site for alpha-L-rhamnose. The N-linked (GlcNAc...) asparagine glycan is linked to Asn98. 117-120 contributes to the alpha-L-rhamnose binding site; sequence GTYK. Residues 139 to 398 form the Olfactomedin-like domain; it reads VCPGTLQKVL…VVRYSLEFGP (260 aa). Positions 400–468 are disordered; it reads DPSAGPATSP…APAPSTRRPP (69 aa). Positions 405–441 are enriched in low complexity; it reads PATSPPLSTTTTARPTPLTSTASPAATTPLRRAPLTT. Pro residues predominate over residues 453 to 468; sequence DLPPATAPAPSTRRPP. 2 disulfide bridges follow: Cys480–Cys515 and Cys503–Cys532. N-linked (GlcNAc...) asparagine glycosylation is found at Asn531, Asn640, Asn741, Asn800, Asn805, and Asn826. A GAIN-B domain is found at 669 to 850; the sequence is PARFLAAKQN…AVLMAHREIY (182 aa). Intrachain disulfides connect Cys801-Cys832 and Cys820-Cys834. The tract at residues 801 to 850 is GPS; that stretch reads CSFWNYSERSMLGYWSTQGCRLVESNKTHTTCACSHLTNFAVLMAHREIY. A helical membrane pass occupies residues 858 to 878; the sequence is LLSVITWVGIVISLVCLAICI. Topologically, residues 879–892 are cytoplasmic; sequence STFCFLRGLQTDRN. Residues 893–913 traverse the membrane as a helical segment; it reads TIHKNLCINLFLAELLFLVGI. Residues 914-919 lie on the Extracellular side of the membrane; the sequence is DKTQYE. Residues 920-940 traverse the membrane as a helical segment; that stretch reads IACPIFAGLLHYFFLAAFSWL. Topologically, residues 941–963 are cytoplasmic; sequence CLEGVHLYLLLVEVFESEYSRTK. A helical membrane pass occupies residues 964 to 984; it reads YYYLGGYCFPALVVGIAAAID. The Extracellular segment spans residues 985–1001; that stretch reads YRSYGTEKACWLRVDNY. The helical transmembrane segment at 1002-1022 threads the bilayer; it reads FIWSFIGPVSFVIVVNLVFLM. Topologically, residues 1023-1049 are cytoplasmic; the sequence is VTLHKMVRSSSVLKPDSSRLDNIKSWA. A helical membrane pass occupies residues 1050–1070; the sequence is LGAIALLFLLGLTWAFGLLFI. The Extracellular portion of the chain corresponds to 1071–1074; that stretch reads NKES. The helical transmembrane segment at 1075 to 1095 threads the bilayer; that stretch reads VVMAYLFTTFNAFQGVFIFVF. Over 1096–1472 the chain is Cytoplasmic; sequence HCALQKKVHK…DGQMQLVTSL (377 aa). Arg1193 bears the Omega-N-methylarginine mark. Position 1219 is a phosphoserine (Ser1219). Disordered regions lie at residues 1247–1271, 1291–1325, 1358–1427, and 1449–1472; these read FNNS…PRGR, NLRG…GGPG, ESES…SRPP, and YLAA…VTSL. Composition is skewed to pro residues over residues 1301–1313 and 1406–1418; these read GPPP…PPVP and ALPP…PGPP. Residue Ser1471 is modified to Phosphoserine.

It belongs to the G-protein coupled receptor 2 family. Adhesion G-protein coupled receptor (ADGR) subfamily. In terms of assembly, forms a heterodimer, consisting of a large extracellular region (p120) non-covalently linked to a seven-transmembrane moiety (p85). Interacts with syntaxin and with proteins of the SHANK family via the PDZ domain. Interacts (via extracellular domain) with FLRT1, FLRT2 and FLRT3 (via extracellular domain). Post-translationally, autoproteolytically cleaved into 2 subunits, an extracellular subunit and a seven-transmembrane subunit. This proteolytic processing takes place early in the biosynthetic pathway, either in the endoplasmic reticulum or in the early compartment of the Golgi apparatus. As to expression, brain-specific expression but low levels are also detected in kidney, lung and spleen.

It localises to the cell membrane. Its subcellular location is the cell projection. It is found in the axon. The protein resides in the growth cone. The protein localises to the synapse. It localises to the presynaptic cell membrane. Its subcellular location is the synaptosome. Functionally, calcium-independent receptor of high affinity for alpha-latrotoxin, an excitatory neurotoxin present in black widow spider venom which triggers massive exocytosis from neurons and neuroendocrine cells. Receptor for TENM2 that mediates heterophilic synaptic cell-cell contact and postsynaptic specialization. Receptor probably implicated in the regulation of exocytosis. The sequence is that of Adhesion G protein-coupled receptor L1 from Bos taurus (Bovine).